A 1736-amino-acid chain; its full sequence is Collagen alpha-2(XI) chain (1736 aa).

An N-terminal signal peptide occupies residues 1–27 (MERCSRCHHLLLLVLLLLWLSAAPAWA). In terms of domain architecture, Laminin G-like spans 57–228 (DVAYRVSRPA…ESCDQKELEC (172 aa)). The segment at 215-486 (QAAYESCDQK…ILQQARVALR (272 aa)) is nonhelical region. Disordered regions lie at residues 229-465 (EGGW…DKGP) and 485-1539 (LRGP…SPGG). The segment covering 258 to 270 (PQNQEPQAQSTES) has biased composition (polar residues). Over residues 363-376 (ALSAETARSEAAAR) the composition is skewed to low complexity. Collagen-like domains lie at 399–447 (GPPG…GPPG), 487–545 (GPPG…ADGA), and 546–587 (RGMP…PPGE). Over residues 400-413 (PPGPEGPAGFPGPP) the composition is skewed to pro residues. The interval 487-1500 (GPPGPMGYTG…PGHPGPPGEV (1014 aa)) is triple-helical region. The span at 515 to 533 (DLGPQGPRGPQGLMGPPGK) shows a compositional bias: low complexity. A compositionally biased stretch (pro residues) spans 615 to 624 (KGPPGIPGPP). Positions 650–663 (QQGTPGTQGLPGPQ) are enriched in low complexity. Basic and acidic residues predominate over residues 765-774 (RGEDGPEGPK). The segment covering 842-861 (PTGPRGQRGPRGATGKSGAK) has biased composition (low complexity). The span at 994 to 1003 (GTAGGPGLKG) shows a compositional bias: gly residues. Residues 1029-1040 (IGPPGRPGPQGP) show a composition bias toward pro residues. Collagen-like domains lie at 1072–1127 (GPAG…ADGE) and 1128–1172 (PGAR…ETGD). Residues 1115–1133 (PVGQPGAAGADGEPGARGP) show a composition bias toward low complexity. Positions 1176 to 1187 (MGPPGPPGPRGP) are enriched in pro residues. The segment covering 1217-1230 (ESGSPGVQGEPGVK) has biased composition (low complexity). 2 stretches are compositionally biased toward basic and acidic residues: residues 1232-1241 (PRGERGEKGE) and 1287-1296 (DGAKGDRGED). Low complexity-rich tracts occupy residues 1341 to 1364 (PGAV…KPGP) and 1376 to 1386 (QQGRPGATGQA). Positions 1388–1397 (PPGPVGPPGL) are enriched in pro residues. The segment covering 1413 to 1422 (PGLIGLIGPP) has biased composition (low complexity). Residues 1444 to 1499 (GETGIPGASGPIGPGGPPGLPGPAGPKGAKGATGPAGPKGEKGVQGPPGHPGPPGE) form the Collagen-like 6 domain. The segment covering 1457-1467 (PGGPPGLPGPA) has biased composition (pro residues). A compositionally biased stretch (low complexity) spans 1469–1481 (PKGAKGATGPAGP). The propeptide at 1501-1736 (IQPLPIQMPK…VLLGPVCFMG (236 aa)) is C-terminal propeptide. A Fibrillar collagen NC1 domain is found at 1541–1735 (EEIFGSLDSL…GVLLGPVCFM (195 aa)). Cysteines 1571 and 1603 form a disulfide. Ca(2+)-binding residues include Asp-1589, Asn-1591, Gln-1592, Cys-1594, and Asp-1597. N-linked (GlcNAc...) asparagine glycosylation is found at Asn-1604 and Asn-1650. Disulfide bonds link Cys-1612–Cys-1733 and Cys-1655–Cys-1689.

This sequence belongs to the fibrillar collagen family. In terms of assembly, trimers composed of three different chains: alpha 1(XI), alpha 2(XI), and alpha 3(XI). Alpha 3(XI) is a post-translational modification of alpha 1(II). Alpha 1(V) can also be found instead of alpha 3(XI)=1(II). In terms of processing, prolines at the third position of the tripeptide repeating unit (G-X-Y) are hydroxylated in some or all of the chains.

Its subcellular location is the secreted. It is found in the extracellular space. The protein resides in the extracellular matrix. Its function is as follows. May play an important role in fibrillogenesis by controlling lateral growth of collagen II fibrils. The chain is Collagen alpha-2(XI) chain (COL11A2) from Bos taurus (Bovine).